The following is a 637-amino-acid chain: Dihydrolipoyllysine-residue acetyltransferase component of pyruvate dehydrogenase complex, mitochondrial (637 aa).

The N-terminal 85 residues, 1–85 (MWRVCVRRAQ…LLGSPGRRSY (85 aa)), are a transit peptide targeting the mitochondrion. The segment at 80–100 (PGRRSYSLPPHQKVPLPSLSP) is disordered. The Lipoyl-binding 1 domain occupies 90–166 (HQKVPLPSLS…PIGSIICITV (77 aa)). S99 carries the post-translational modification Phosphoserine. K131 is modified (N6-lipoyllysine). Disordered regions lie at residues 189-219 (QAAA…PPHM) and 307-340 (LKPQ…PAGP). The span at 201-211 (AAPTAPSAKAP) shows a compositional bias: low complexity. Residues 218 to 287 (HMQVSAVGEQ…PLGAPLCIIV (70 aa)) enclose the Lipoyl-binding 2 domain. Residues 310–321 (QAPPPVPPPVAA) are compositionally biased toward pro residues. Positions 322-333 (APPTAQPLAPTP) are enriched in low complexity. Residues 345–382 (FVSPLAKKLAAERGIDLTQVKGTGPEGRIIKKDIDSFV) form the Peripheral subunit-binding (PSBD) domain. R451 is a binding site for CoA. N6-acetyllysine is present on K456. K463 is modified (N6-succinyllysine). S465 is a binding site for CoA. Residue K537 is modified to N6-succinyllysine. 3 residues coordinate CoA: S556, N557, and G581. Active-site residues include H610 and D614.

The protein belongs to the 2-oxoacid dehydrogenase family. As to quaternary structure, part of the pyruvate dehydrogenase complex (PDHc) that is a multi-enzyme complex composed of multiple copies of three enzymes, pyruvate dehydrogenase (subunits PDH1A and PDHB, E1 component), dihydrolipoamide acetyltransferase (DLAT, E2 component), and dihydrolipoamide dehydrogenase (DLD, E3 component) to which is added an additional protein the E3-binding protein (PDHX, E3BP). In terms of structural architecture, the E2 and E3BP components assemble into a 60meric central core with icosahedral symmetry. The central core is decorated with E1 and E3 proteins. Currently, two alternative models for the E2:E3BP stoichiometry are considered as being either 48:12 (E2(48)-E3BP(12)) or 40:20 (E2(40)-E3BP(20)). Interacts with PDK2 and PDK3. Interacts with SIRT4. Interacts with PDHB. (R)-lipoate is required as a cofactor. Post-translationally, delipoylated at Lys-131 by SIRT4, delipoylation decreases the PHD complex activity. In terms of tissue distribution, detected at higher levels in cauda epididymal spermatazoa than in caput epididymal spermatazoa (at protein level).

Its subcellular location is the mitochondrion matrix. The catalysed reaction is N(6)-[(R)-dihydrolipoyl]-L-lysyl-[protein] + acetyl-CoA = N(6)-[(R)-S(8)-acetyldihydrolipoyl]-L-lysyl-[protein] + CoA. Its function is as follows. As part of the pyruvate dehydrogenase complex, catalyzes the transfers of an acetyl group to a lipoic acid moiety. The pyruvate dehydrogenase complex, catalyzes the overall conversion of pyruvate to acetyl-CoA and CO(2), and thereby links cytoplasmic glycolysis and the mitochondrial tricarboxylic acid (TCA) cycle. The protein is Dihydrolipoyllysine-residue acetyltransferase component of pyruvate dehydrogenase complex, mitochondrial of Mesocricetus auratus (Golden hamster).